Consider the following 307-residue polypeptide: N-acetylmuramic acid 6-phosphate etherase (307 aa).

Positions 62–225 (IVSSFNRGGR…STASMIRIGK (164 aa)) constitute an SIS domain. The Proton donor role is filled by Glu90. Residue Glu121 is part of the active site.

Belongs to the GCKR-like family. MurNAc-6-P etherase subfamily. In terms of assembly, homodimer.

It catalyses the reaction N-acetyl-D-muramate 6-phosphate + H2O = N-acetyl-D-glucosamine 6-phosphate + (R)-lactate. It participates in amino-sugar metabolism; 1,6-anhydro-N-acetylmuramate degradation. Its pathway is amino-sugar metabolism; N-acetylmuramate degradation. It functions in the pathway cell wall biogenesis; peptidoglycan recycling. Functionally, specifically catalyzes the cleavage of the D-lactyl ether substituent of MurNAc 6-phosphate, producing GlcNAc 6-phosphate and D-lactate. Together with AnmK, is also required for the utilization of anhydro-N-acetylmuramic acid (anhMurNAc) either imported from the medium or derived from its own cell wall murein, and thus plays a role in cell wall recycling. The chain is N-acetylmuramic acid 6-phosphate etherase from Pseudoalteromonas atlantica (strain T6c / ATCC BAA-1087).